A 228-amino-acid chain; its full sequence is MFDFGLGELVFVGIIALIVLGPERLPEAARTAGRLIGRLQRFVGSVKQEFDTQIELEELRKAKQEFEAAAAQVRDSLKETGTDMQNSLHDISDGLKPWEKLPEQRTPADFGVDENGNPFPDAANTLSDGISDVMPSERSDTSAEILGDSGQTGSTAEPAETDQDRAWREYLTASAAAPVVQTVEVSYIDTAVETPVPHTTSLRKQAISRKRGLRPKHRAKPKLRVRKS.

The chain crosses the membrane as a helical span at residues 1–21 (MFDFGLGELVFVGIIALIVLG). Disordered stretches follow at residues 126–162 (LSDG…AETD) and 196–228 (VPHT…VRKS). Residues 206 to 228 (AISRKRGLRPKHRAKPKLRVRKS) are compositionally biased toward basic residues.

This sequence belongs to the TatB family. In terms of assembly, the Tat system comprises two distinct complexes: a TatABC complex, containing multiple copies of TatA, TatB and TatC subunits, and a separate TatA complex, containing only TatA subunits. Substrates initially bind to the TatABC complex, which probably triggers association of the separate TatA complex to form the active translocon.

It localises to the cell inner membrane. Functionally, part of the twin-arginine translocation (Tat) system that transports large folded proteins containing a characteristic twin-arginine motif in their signal peptide across membranes. Together with TatC, TatB is part of a receptor directly interacting with Tat signal peptides. TatB may form an oligomeric binding site that transiently accommodates folded Tat precursor proteins before their translocation. The chain is Sec-independent protein translocase protein TatB from Neisseria meningitidis serogroup C / serotype 2a (strain ATCC 700532 / DSM 15464 / FAM18).